A 343-amino-acid polypeptide reads, in one-letter code: Multidrug resistance protein MdtN (343 aa).

Residues 1-12 (MESTPKKAPRSK) lie on the Cytoplasmic side of the membrane. A helical; Signal-anchor for type II membrane protein transmembrane segment spans residues 13–33 (FPALLVVALALVALVFVIWRV). The Periplasmic segment spans residues 34 to 343 (DSAPSTNDAY…ASAVANLEPQ (310 aa)).

The protein belongs to the membrane fusion protein (MFP) (TC 8.A.1) family. As to quaternary structure, could be part of a tripartite efflux system composed of MdtN, MdtO and MdtP.

The protein resides in the cell inner membrane. Could be involved in resistance to puromycin, acriflavine and tetraphenylarsonium chloride. This is Multidrug resistance protein MdtN (mdtN) from Escherichia coli (strain K12).